Consider the following 194-residue polypeptide: ATP-dependent Clp protease proteolytic subunit (194 aa).

Serine 98 (nucleophile) is an active-site residue. Histidine 123 is a catalytic residue.

This sequence belongs to the peptidase S14 family. In terms of assembly, fourteen ClpP subunits assemble into 2 heptameric rings which stack back to back to give a disk-like structure with a central cavity, resembling the structure of eukaryotic proteasomes.

It localises to the cytoplasm. The enzyme catalyses Hydrolysis of proteins to small peptides in the presence of ATP and magnesium. alpha-casein is the usual test substrate. In the absence of ATP, only oligopeptides shorter than five residues are hydrolyzed (such as succinyl-Leu-Tyr-|-NHMec, and Leu-Tyr-Leu-|-Tyr-Trp, in which cleavage of the -Tyr-|-Leu- and -Tyr-|-Trp bonds also occurs).. Cleaves peptides in various proteins in a process that requires ATP hydrolysis. Has a chymotrypsin-like activity. Plays a major role in the degradation of misfolded proteins. The protein is ATP-dependent Clp protease proteolytic subunit of Clostridium kluyveri (strain NBRC 12016).